Consider the following 138-residue polypeptide: Ribosome-binding factor A (138 aa).

The protein belongs to the RbfA family. As to quaternary structure, monomer. Binds 30S ribosomal subunits, but not 50S ribosomal subunits or 70S ribosomes.

The protein resides in the cytoplasm. One of several proteins that assist in the late maturation steps of the functional core of the 30S ribosomal subunit. Associates with free 30S ribosomal subunits (but not with 30S subunits that are part of 70S ribosomes or polysomes). Required for efficient processing of 16S rRNA. May interact with the 5'-terminal helix region of 16S rRNA. The protein is Ribosome-binding factor A of Paracoccus denitrificans (strain Pd 1222).